The primary structure comprises 260 residues: Phosphate import ATP-binding protein PstB (260 aa).

An ABC transporter domain is found at 14 to 255 (VQVKNLAFYY…PRNKQTEDYI (242 aa)). Position 46–53 (46–53 (GPSGCGKS)) interacts with ATP.

This sequence belongs to the ABC transporter superfamily. Phosphate importer (TC 3.A.1.7) family. The complex is composed of two ATP-binding proteins (PstB), two transmembrane proteins (PstC and PstA) and a solute-binding protein (PstS).

It localises to the cell inner membrane. The enzyme catalyses phosphate(out) + ATP + H2O = ADP + 2 phosphate(in) + H(+). In terms of biological role, part of the ABC transporter complex PstSACB involved in phosphate import. Responsible for energy coupling to the transport system. This is Phosphate import ATP-binding protein PstB from Syntrophotalea carbinolica (strain DSM 2380 / NBRC 103641 / GraBd1) (Pelobacter carbinolicus).